The primary structure comprises 62 residues: Photosystem II reaction center protein Z (62 aa).

The next 2 membrane-spanning stretches (helical) occupy residues Ala-8–Ala-28 and Phe-41–Val-61.

It belongs to the PsbZ family. PSII is composed of 1 copy each of membrane proteins PsbA, PsbB, PsbC, PsbD, PsbE, PsbF, PsbH, PsbI, PsbJ, PsbK, PsbL, PsbM, PsbT, PsbY, PsbZ, Psb30/Ycf12, at least 3 peripheral proteins of the oxygen-evolving complex and a large number of cofactors. It forms dimeric complexes.

It is found in the plastid. Its subcellular location is the chloroplast thylakoid membrane. In terms of biological role, may control the interaction of photosystem II (PSII) cores with the light-harvesting antenna, regulates electron flow through the 2 photosystem reaction centers. PSII is a light-driven water plastoquinone oxidoreductase, using light energy to abstract electrons from H(2)O, generating a proton gradient subsequently used for ATP formation. The chain is Photosystem II reaction center protein Z from Chlorella vulgaris (Green alga).